Reading from the N-terminus, the 464-residue chain is Anthranilate synthase component 1 (464 aa).

Residues Ser-41 and 236 to 238 contribute to the L-tryptophan site; that span reads PYM. 271–272 serves as a coordination point for chorismate; the sequence is GT. Position 298 (Glu-298) interacts with Mg(2+). Chorismate-binding positions include Tyr-386, Arg-406, 420-422, and Gly-422; that span reads GAG. A Mg(2+)-binding site is contributed by Glu-435.

Belongs to the anthranilate synthase component I family. As to quaternary structure, heterotetramer consisting of two non-identical subunits: a beta subunit (TrpG) and a large alpha subunit (TrpE). It depends on Mg(2+) as a cofactor.

The enzyme catalyses chorismate + L-glutamine = anthranilate + pyruvate + L-glutamate + H(+). It functions in the pathway amino-acid biosynthesis; L-tryptophan biosynthesis; L-tryptophan from chorismate: step 1/5. Its activity is regulated as follows. Feedback inhibited by tryptophan. Its function is as follows. Part of a heterotetrameric complex that catalyzes the two-step biosynthesis of anthranilate, an intermediate in the biosynthesis of L-tryptophan. In the first step, the glutamine-binding beta subunit (TrpG) of anthranilate synthase (AS) provides the glutamine amidotransferase activity which generates ammonia as a substrate that, along with chorismate, is used in the second step, catalyzed by the large alpha subunit of AS (TrpE) to produce anthranilate. In the absence of TrpG, TrpE can synthesize anthranilate directly from chorismate and high concentrations of ammonia. This is Anthranilate synthase component 1 (trpE) from Methanothermobacter thermautotrophicus (strain ATCC 29096 / DSM 1053 / JCM 10044 / NBRC 100330 / Delta H) (Methanobacterium thermoautotrophicum).